The chain runs to 305 residues: Probable GTP 3',8-cyclase (305 aa).

Positions 6–228 (NHRRPLVSLR…MTRKFMQDRK (223 aa)) constitute a Radical SAM core domain. Residue Arg15 participates in GTP binding. The [4Fe-4S] cluster site is built by Cys22 and Cys26. Tyr28 serves as a coordination point for S-adenosyl-L-methionine. Cys29 lines the [4Fe-4S] cluster pocket. Position 62 (Arg62) interacts with GTP. Residue Gly66 coordinates S-adenosyl-L-methionine. Thr92 serves as a coordination point for GTP. Ser116 is an S-adenosyl-L-methionine binding site. Position 153 (Lys153) interacts with GTP. 2 residues coordinate [4Fe-4S] cluster: Cys249 and Cys252. 254–256 (RLR) serves as a coordination point for GTP. Cys266 is a binding site for [4Fe-4S] cluster.

The protein belongs to the radical SAM superfamily. MoaA family. [4Fe-4S] cluster serves as cofactor.

The catalysed reaction is GTP + AH2 + S-adenosyl-L-methionine = (8S)-3',8-cyclo-7,8-dihydroguanosine 5'-triphosphate + 5'-deoxyadenosine + L-methionine + A + H(+). It participates in cofactor biosynthesis; molybdopterin biosynthesis. Catalyzes the cyclization of GTP to (8S)-3',8-cyclo-7,8-dihydroguanosine 5'-triphosphate. This is Probable GTP 3',8-cyclase from Methanothermobacter marburgensis (strain ATCC BAA-927 / DSM 2133 / JCM 14651 / NBRC 100331 / OCM 82 / Marburg) (Methanobacterium thermoautotrophicum).